The primary structure comprises 756 residues: Membrane-anchored protein 1 (756 aa).

A signal peptide spans 1–24 (MIRNTLAFLAILFLLIPTALLIIG). Residues N52 and N64 are each glycosylated (N-linked (GlcNAc...) asparagine). 3 helical membrane passes run 91–111 (IISA…IFLV), 120–140 (IIVV…ELVL), and 148–168 (QSYV…ALCL). N190 is a glycosylation site (N-linked (GlcNAc...) asparagine). Residues 281–328 (YDEFRKSESSPSRSSVLSTSKPEVHETEGYCPHKTGNRPGFPSLNIPR) are disordered. Residues 289–300 (SSPSRSSVLSTS) show a composition bias toward low complexity. N396 and N407 each carry an N-linked (GlcNAc...) asparagine glycan. The interval 427–453 (EPPATRMPQTRSPVNDHSSFPSDLPIK) is disordered. Residues 433-447 (MPQTRSPVNDHSSFP) show a composition bias toward polar residues. Residue S438 is modified to Phosphoserine. Residues N459, N470, N471, N496, N497, N521, N522, N547, N548, N573, N574, N594, N598, N599, N618, N623, N649, N664, N676, and N685 are each glycosylated (N-linked (GlcNAc...) asparagine). The disordered stretch occupies residues 482 to 650 (MLKNVGNGPR…MPTSPNSRNN (169 aa)). A compositionally biased stretch (low complexity) spans 485-520 (NVGNGPRNAPRNNSSNNLHAQGGMPMNMRGPRGAPR). Composition is skewed to polar residues over residues 593 to 605 (RNTS…SEFN), 617 to 629 (RNAS…TDLF), and 640 to 650 (GMPTSPNSRNN). The segment covering 686–697 (GSRNPSHGSLNT) has biased composition (polar residues). Residues 686–713 (GSRNPSHGSLNTAHAGMGYGPRSMMRDP) are disordered. N715 carries an N-linked (GlcNAc...) asparagine glycan. Residues 735 to 756 (FELPVRGNRNNRRGPGGNRMIR) are disordered.

The protein to yeast YOL019W and YMR063W.

It is found in the cell membrane. The protein resides in the cell tip. Functionally, required for correct cell separation at high temperatures. This chain is Membrane-anchored protein 1 (mac1), found in Schizosaccharomyces pombe (strain 972 / ATCC 24843) (Fission yeast).